The sequence spans 545 residues: CTP synthase (545 aa).

The tract at residues 1-266 is amidoligase domain; it reads MATNYIFVTG…DDFVCERFRL (266 aa). Ser14 contributes to the CTP binding site. Ser14 is a UTP binding site. ATP contacts are provided by residues 15–20 and Asp72; that span reads SLGKGI. Asp72 and Glu140 together coordinate Mg(2+). CTP contacts are provided by residues 147–149, 187–192, and Lys223; these read DIE and KTKPTQ. Residues 187–192 and Lys223 each bind UTP; that span reads KTKPTQ. An ATP-binding site is contributed by 239–241; it reads KDV. The 252-residue stretch at 291-542 folds into the Glutamine amidotransferase type-1 domain; the sequence is TIGMVGKYTE…VKAAYENHKK (252 aa). Position 352 (Gly352) interacts with L-glutamine. The active-site Nucleophile; for glutamine hydrolysis is the Cys379. Residues 380 to 383, Glu403, and Arg470 each bind L-glutamine; that span reads LGMQ. Residues His515 and Glu517 contribute to the active site.

This sequence belongs to the CTP synthase family. In terms of assembly, homotetramer.

It carries out the reaction UTP + L-glutamine + ATP + H2O = CTP + L-glutamate + ADP + phosphate + 2 H(+). It catalyses the reaction L-glutamine + H2O = L-glutamate + NH4(+). The enzyme catalyses UTP + NH4(+) + ATP = CTP + ADP + phosphate + 2 H(+). It participates in pyrimidine metabolism; CTP biosynthesis via de novo pathway; CTP from UDP: step 2/2. Allosterically activated by GTP, when glutamine is the substrate; GTP has no effect on the reaction when ammonia is the substrate. The allosteric effector GTP functions by stabilizing the protein conformation that binds the tetrahedral intermediate(s) formed during glutamine hydrolysis. Inhibited by the product CTP, via allosteric rather than competitive inhibition. In terms of biological role, catalyzes the ATP-dependent amination of UTP to CTP with either L-glutamine or ammonia as the source of nitrogen. Regulates intracellular CTP levels through interactions with the four ribonucleotide triphosphates. This is CTP synthase from Haemophilus influenzae (strain PittEE).